The sequence spans 309 residues: Probable copper-dependent oxygenase clz3 (309 aa).

2 N-linked (GlcNAc...) asparagine glycosylation sites follow: N9 and N249. Residues 257–277 (FAVPLAAIAFIALIISGGYVI) traverse the membrane as a helical segment.

This sequence belongs to the clz3 oxygenase family.

It localises to the membrane. It functions in the pathway secondary metabolite biosynthesis. Functionally, probable copper-dependent oxygenase; part of the gene cluster that mediates the biosynthesis of squalestatin S1 (SQS1, also known as zaragozic acid A), a heavily oxidized fungal polyketide that offers potent cholesterol lowering activity by targeting squalene synthase (SS). SQS1 is composed of a 2,8-dioxobicyclic[3.2.1]octane-3,4,5-tricarboxyclic acid core that is connected to two lipophilic polyketide arms. These initial steps feature the priming of an unusual benzoic acid starter unit onto the highly reducing polyketide synthase clz14, followed by oxaloacetate extension and product release to generate a tricarboxylic acid containing product. The phenylalanine ammonia lyase (PAL) clz10 and the acyl-CoA ligase clz12 are involved in transforming phenylalanine into benzoyl-CoA. The citrate synthase-like protein clz17 is involved in connecting the C-alpha-carbons of the hexaketide chain and oxaloacetate to afford the tricarboxylic acid unit. The potential hydrolytic enzymes, clz11 and clz13, are in close proximity to pks2 and may participate in product release. On the other side, the tetraketide arm is synthesized by a the squalestatin tetraketide synthase clz2 and enzymatically esterified to the core in the last biosynthetic step, by the acetyltransferase clz6. The biosynthesis of the tetraketide must involve 3 rounds of chain extension. After the first and second rounds methyl-transfer occurs, and in all rounds of extension the ketoreductase and dehydratase are active. The enoyl reductase and C-MeT of clz2 are not active in the final round of extension. The acetyltransferase clz6 appears to have a broad substrate selectivity for its acyl CoA substrate, allowing the in vitro synthesis of novel squalestatins. The biosynthesis of SQS1 requires several oxidative steps likely performed by oxidoreductases clz3, clz15 and clz16. Finally, in support of the identification of the cluster as being responsible for SQS1 production, the cluster contains a gene encoding a putative squalene synthase (SS) clz20, suggesting a likely mechanism for self-resistance. The polypeptide is Probable copper-dependent oxygenase clz3 (Cochliobolus lunatus (Filamentous fungus)).